The chain runs to 368 residues: L-lactate oxidase (368 aa).

The region spanning 13–368 (VNAIDVLDLA…KQMKVKTTFA (356 aa)) is the FMN hydroxy acid dehydrogenase domain. A pyruvate-binding site is contributed by Tyr39. FMN-binding positions include 92–94 (PIA), Ser121, and Gln143. Tyr145 provides a ligand contact to pyruvate. Residue Thr171 coordinates FMN. Arg180 serves as a coordination point for pyruvate. Lys239 and Ser261 together coordinate FMN. His263 and Arg266 together coordinate pyruvate. His263 acts as the Proton acceptor in catalysis. FMN contacts are provided by residues 294-298 (DGGVQ) and Arg318.

This sequence belongs to the FMN-dependent alpha-hydroxy acid dehydrogenase family. Homotetramer. It depends on FMN as a cofactor.

It catalyses the reaction (S)-lactate + O2 = pyruvate + H2O2. The catalysed reaction is 2-hydroxyoctanoate + O2 = 2-oxooctanoate + H2O2. Its function is as follows. Catalyzes the oxidation of (S)-lactate (L-lactate) to pyruvate, with a reduction of O2 to H2O2. To a lesser extent is also able to use 2-hydroxyoctanoate as substrate. May be involved in the utilization of L-lactate as an energy source for growth. This chain is L-lactate oxidase, found in Lacticaseibacillus rhamnosus (strain LMS2-1).